Reading from the N-terminus, the 176-residue chain is Peptidyl-prolyl cis-trans isomerase cyp5 (176 aa).

The PPIase cyclophilin-type domain occupies 10-173 (FFDVAVNGKP…AKVEIVDCGE (164 aa)).

The protein belongs to the cyclophilin-type PPIase family.

The catalysed reaction is [protein]-peptidylproline (omega=180) = [protein]-peptidylproline (omega=0). In terms of biological role, PPIases accelerate the folding of proteins. It catalyzes the cis-trans isomerization of proline imidic peptide bonds in oligopeptides. The protein is Peptidyl-prolyl cis-trans isomerase cyp5 (cyp5) of Rhizopus delemar (strain RA 99-880 / ATCC MYA-4621 / FGSC 9543 / NRRL 43880) (Mucormycosis agent).